The primary structure comprises 219 residues: Ribose-5-phosphate isomerase A (219 aa).

Substrate-binding positions include 28 to 31 (TGST), 81 to 84 (DGAD), and 94 to 97 (KGGG). The Proton acceptor role is filled by Glu-103. Residue Lys-121 coordinates substrate.

The protein belongs to the ribose 5-phosphate isomerase family. Homodimer.

It catalyses the reaction aldehydo-D-ribose 5-phosphate = D-ribulose 5-phosphate. It functions in the pathway carbohydrate degradation; pentose phosphate pathway; D-ribose 5-phosphate from D-ribulose 5-phosphate (non-oxidative stage): step 1/1. Its function is as follows. Catalyzes the reversible conversion of ribose-5-phosphate to ribulose 5-phosphate. This Enterobacter cloacae protein is Ribose-5-phosphate isomerase A.